The following is a 242-amino-acid chain: ATP synthase subunit a (242 aa).

7 helical membrane passes run I23–L43, V62–L82, Y84–L104, H113–F133, I143–F163, L176–K196, and L201–I221.

Belongs to the ATPase A chain family. In terms of assembly, F-type ATPases have 2 components, CF(1) - the catalytic core - and CF(0) - the membrane proton channel. CF(1) has five subunits: alpha(3), beta(3), gamma(1), delta(1), epsilon(1). CF(0) has three main subunits: a(1), b(2) and c(9-12). The alpha and beta chains form an alternating ring which encloses part of the gamma chain. CF(1) is attached to CF(0) by a central stalk formed by the gamma and epsilon chains, while a peripheral stalk is formed by the delta and b chains.

It localises to the cell inner membrane. Key component of the proton channel; it plays a direct role in the translocation of protons across the membrane. This chain is ATP synthase subunit a, found in Anaplasma phagocytophilum (strain HZ).